Reading from the N-terminus, the 408-residue chain is MDKLLERFLNYVSLDTQSKAGVRQVPSTEGQWKLLHLLKEQLEEMGLINVTLSEKGTLMATLPANVPGDIPAIGFISHVDTSPDCSGKNVNPQIVENYRGGDIALGIGDEVLSPVMFPVLHQLLGQTLITTDGKTLLGADDKAGIAEIMTALAVLQQKNIPHGDIRVAFTPDEEVGKGAKHFDVDAFDARWAYTVDGGGVGELEFENFNAASVNIKIVGNNVHPGTAKGVMVNALSLAARIHAEVPADESPEMTEGYEGFYHLASMKGTVERADMHYIIRDFDRKQFEARKRKMMEIAKKVGKGLHPDCYIELVIEDSYYNMREKVVEHPHILDIAQQAMRDCDIEPELKPIRGGTDGAQLSFMGLPCPNLFTGGYNYHGKHEFVTLEGMEKAVQVIVRIAELTAQRK.

Histidine 78 provides a ligand contact to Zn(2+). Aspartate 80 is an active-site residue. A Zn(2+)-binding site is contributed by aspartate 140. Residue glutamate 173 is the Proton acceptor of the active site. The Zn(2+) site is built by glutamate 174, aspartate 196, and histidine 379.

It belongs to the peptidase M20B family. It depends on Zn(2+) as a cofactor.

It is found in the cytoplasm. The enzyme catalyses Release of the N-terminal residue from a tripeptide.. Its function is as follows. Cleaves the N-terminal amino acid of tripeptides. This Escherichia coli (strain UTI89 / UPEC) protein is Peptidase T.